The sequence spans 329 residues: GTP 3',8-cyclase (329 aa).

The Radical SAM core domain occupies 1 to 229 (MNQIDYLRIS…EGQVRGNGPA (229 aa)). Arg-8 provides a ligand contact to GTP. [4Fe-4S] cluster is bound by residues Cys-15 and Cys-19. Residue Tyr-21 participates in S-adenosyl-L-methionine binding. Cys-22 contributes to the [4Fe-4S] cluster binding site. Arg-60 is a GTP binding site. Gly-64 contacts S-adenosyl-L-methionine. GTP is bound at residue Thr-91. Ser-115 serves as a coordination point for S-adenosyl-L-methionine. Residue Lys-155 coordinates GTP. Met-189 is a binding site for S-adenosyl-L-methionine. [4Fe-4S] cluster-binding residues include Cys-252 and Cys-255. 257–259 (RLR) is a GTP binding site. Cys-269 is a binding site for [4Fe-4S] cluster.

This sequence belongs to the radical SAM superfamily. MoaA family. Monomer and homodimer. It depends on [4Fe-4S] cluster as a cofactor.

The enzyme catalyses GTP + AH2 + S-adenosyl-L-methionine = (8S)-3',8-cyclo-7,8-dihydroguanosine 5'-triphosphate + 5'-deoxyadenosine + L-methionine + A + H(+). Its pathway is cofactor biosynthesis; molybdopterin biosynthesis. Functionally, catalyzes the cyclization of GTP to (8S)-3',8-cyclo-7,8-dihydroguanosine 5'-triphosphate. The sequence is that of GTP 3',8-cyclase from Microcystis aeruginosa (strain NIES-843 / IAM M-2473).